The following is a 141-amino-acid chain: Large ribosomal subunit protein uL11 (141 aa).

It belongs to the universal ribosomal protein uL11 family. Part of the ribosomal stalk of the 50S ribosomal subunit. Interacts with L10 and the large rRNA to form the base of the stalk. L10 forms an elongated spine to which L12 dimers bind in a sequential fashion forming a multimeric L10(L12)X complex. In terms of processing, one or more lysine residues are methylated.

In terms of biological role, forms part of the ribosomal stalk which helps the ribosome interact with GTP-bound translation factors. The chain is Large ribosomal subunit protein uL11 from Synechococcus sp. (strain CC9605).